We begin with the raw amino-acid sequence, 534 residues long: Pentatricopeptide repeat-containing protein At5g59600 (534 aa).

PPR repeat units lie at residues Leu-50 to Arg-80, Asp-81 to Leu-115, Asp-116 to Ser-150, Asp-151 to Gln-181, Asp-182 to Pro-216, Asp-217 to Pro-251, Asp-252 to Pro-286, Asn-287 to Asp-321, His-322 to Lys-352, Thr-353 to Leu-387, Asp-388 to Lys-418, and Arg-424 to Glu-454. Residues Val-459–Val-534 are type E motif.

Belongs to the PPR family. PCMP-E subfamily.

This chain is Pentatricopeptide repeat-containing protein At5g59600 (PCMP-E1), found in Arabidopsis thaliana (Mouse-ear cress).